Consider the following 333-residue polypeptide: Probable cytosolic iron-sulfur protein assembly protein ciao1 (333 aa).

7 WD repeats span residues 14 to 53 (HPDSRCWFLAWNPSGTLLASCGGDRTIRIWGKDGDNWVCK), 59 to 98 (GHQRTVRKVSWSPCGNYLASASFDATTCIWMKKKEEFECI), 103 to 142 (GHENEVKSVAWAPSGSLLATCSRDKSVWVWEVDEEEEYEC), 148 to 187 (SHTQDVKHVVWHPNQELLASASYDDSVKLYREEEDDWVCC), 192 to 231 (GHTSTVWSLAFDQTGEQLATCSDDKTVRIWRQLGTGEQGS), 246 to 285 (YHTRTVYDVNWNHLTGAIATACGDDAVRIFEEDPGSDPLQ), and 297 to 333 (AHTQDVNCVTWHPKEPNLLASCSDDGEMAFWRYQKPE).

The protein belongs to the WD repeat CIA1 family. Component of the CIA complex.

Functionally, key component of the cytosolic iron-sulfur protein assembly (CIA) complex, a multiprotein complex that mediates the incorporation of iron-sulfur cluster into extramitochondrial Fe/S proteins. This is Probable cytosolic iron-sulfur protein assembly protein ciao1 (ciao1) from Xenopus tropicalis (Western clawed frog).